The primary structure comprises 294 residues: Small ribosomal subunit protein uS2 (294 aa).

The tract at residues 254 to 294 (ESSNTEAPVAETAAAEAPVADAAIEAPVAEEAKTTEADDTK) is disordered. A compositionally biased stretch (low complexity) spans 259-282 (EAPVAETAAAEAPVADAAIEAPVA). A compositionally biased stretch (basic and acidic residues) spans 283–294 (EEAKTTEADDTK).

The protein belongs to the universal ribosomal protein uS2 family.

The chain is Small ribosomal subunit protein uS2 from Renibacterium salmoninarum (strain ATCC 33209 / DSM 20767 / JCM 11484 / NBRC 15589 / NCIMB 2235).